A 224-amino-acid chain; its full sequence is MLLKHFPHDEKPRERFIKYGPSSLSNHELVAILLRTGTKKESVLQISARLLQTFGGLRSVREATIEEMSKIRGVGKAKAISLLAALELGTRLHHQTTDNRYVIRTPEDGANFVMEDMRFLTQENFVCLYLNTKNQVLHKHTVFIGSLNSSIVHPREIFKEAFKRSAASFICVHNHPSGDPTPSREDIEVTQRLFECGKLIGIQLLDHLVIGDQKFVSLKEKGYL.

In terms of domain architecture, MPN spans 102–224 (VIRTPEDGAN…FVSLKEKGYL (123 aa)). Positions 173, 175, and 186 each coordinate Zn(2+). The JAMM motif signature appears at 173-186 (HNHPSGDPTPSRED).

Belongs to the UPF0758 family.

This Bacillus pumilus (strain SAFR-032) protein is UPF0758 protein BPUM_2444.